Reading from the N-terminus, the 455-residue chain is MSFVPGQENAGSRSSSGNRAGNGILKKTTWADQTERGLNNQNRGRKNQPKQTATTQPNSGSVVPHYSWFSGITQFQKGKEFQFAQGQGVPIANGIPASQQKGYWYRHNRRSFKTPDGQQKQLLPRWYFYYLGTGPYAGAEYGDDIEGVVWVASQQAETRTSADIVERDPSSHEAIPTRFAPGTVLPQGFYVEGSGRSAPASRSGSRPQSRGPNNRARSSSNQRQPASTVKPDMAEEIAALVLAKLGKDAGQPKQVTKQSAKEVRQKILNKPRQKRTPNKQCPVQQCFGKRGPNQNFGGPEMLKLGTSDPQFPILAELAPTAGAFFFGSKLELVKKNSGGADGPTKDVYELQYSGAVRFDSTLPGFETIMKVLNENLNAYQNQDGGADVVSPKPQRKRGTKQKAQKDEVDNVSVAKPKSSVQRNVSRELTPEDRSLLAQILDDGVVPDGLEDDSNV.

The segment at 1–62 (MSFVPGQENA…ATTQPNSGSV (62 aa)) is disordered. Residues 9–23 (NAGSRSSSGNRAGNG) show a composition bias toward low complexity. 2 stretches are compositionally biased toward polar residues: residues 30–42 (WADQTERGLNNQN) and 49–61 (PKQTATTQPNSGS). The interval 56-197 (QPNSGSVVPH…GFYVEGSGRS (142 aa)) is RNA-binding. Residues 64 to 193 (PHYSWFSGIT…VLPQGFYVEG (130 aa)) enclose the CoV N NTD domain. The RNA site is built by arginine 109, arginine 125, and arginine 167. Disordered regions lie at residues 159-230 (RTSA…STVK), 271-290 (PRQKRTPNKQCPVQQCFGKR), and 382-429 (QDGG…RELT). A Phosphoserine; by host modification is found at serine 170. A Phosphothreonine; by host modification is found at threonine 177. Residues 193–212 (GSGRSAPASRSGSRPQSRGP) show a composition bias toward low complexity. Residue serine 194 is modified to Phosphoserine; by host. Residues 215 to 227 (RARSSSNQRQPAS) show a composition bias toward polar residues. The region spanning 260-383 (AKEVRQKILN…ENLNAYQNQD (124 aa)) is the CoV N CTD domain. Residues 267–384 (ILNKPRQKRT…NLNAYQNQDG (118 aa)) form a dimerization region. The residue at position 390 (serine 390) is a Phosphoserine; by host. Basic residues predominate over residues 393 to 402 (PQRKRGTKQK). Serine 425 carries the post-translational modification Phosphoserine; by host. Threonine 429 carries the phosphothreonine; by host modification.

The protein belongs to the betacoronavirus nucleocapsid protein family. Homooligomer. Both monomeric and oligomeric forms interact with RNA. Interacts with protein M. Interacts with NSP3; this interaction serves to tether the genome to the newly translated replicase-transcriptase complex at a very early stage of infection. Interacts (when phosphorylated) with host DDX1; this interaction is essential to produce a full set of subgenomic and genomic RNAs. In terms of processing, ADP-ribosylated. The ADP-ribosylation is retained in the virion during infection. Post-translationally, phosphorylated on serine and threonine residues. Phosphorylated by host GSK3A and GSK3B. Phosphorylation allows recruitment of host RNA helicase DDX1 which facilitates template readthrough and enables longer subgenomic mRNA synthesis.

The protein localises to the virion. It localises to the host endoplasmic reticulum-Golgi intermediate compartment. It is found in the host Golgi apparatus. In terms of biological role, packages the positive strand viral genome RNA into a helical ribonucleocapsid (RNP) and plays a fundamental role during virion assembly through its interactions with the viral genome and membrane protein M. Plays an important role in enhancing the efficiency of subgenomic viral RNA transcription as well as viral replication. This Murine coronavirus (strain JHM) (MHV-JHM) protein is Nucleoprotein.